Here is a 148-residue protein sequence, read N- to C-terminus: Wheatwin-2 (148 aa).

The signal sequence occupies residues 1 to 23; sequence MTMAARLMLVAALLCAAAAAATA. Residue Gln-24 is modified to Pyrrolidone carboxylic acid. Positions 24 to 148 constitute a Barwin domain; sequence QQATNVRATY…VNYQFVDCRD (125 aa). 3 disulfide bridges follow: Cys-54-Cys-86, Cys-75-Cys-109, and Cys-89-Cys-146.

As to quaternary structure, monomer.

In terms of biological role, shows antifungal activity towards B.cinerea and towards the wheat-specific pathogenic fungi F.culmorum and F.graminearum (groups 1 and 2). This Triticum aestivum (Wheat) protein is Wheatwin-2 (PR4B).